Here is a 581-residue protein sequence, read N- to C-terminus: Arginine--tRNA ligase (581 aa).

Residues 122–132 (PNVAKPMHVGH) carry the 'HIGH' region motif.

The protein belongs to the class-I aminoacyl-tRNA synthetase family. As to quaternary structure, monomer.

The protein resides in the cytoplasm. It catalyses the reaction tRNA(Arg) + L-arginine + ATP = L-arginyl-tRNA(Arg) + AMP + diphosphate. The protein is Arginine--tRNA ligase of Francisella tularensis subsp. novicida (strain U112).